The primary structure comprises 378 residues: Deoxyguanosinetriphosphate triphosphohydrolase-like protein (378 aa).

The segment at 1 to 28 (MLAPYACQPGESRGRQQPESMSTFRSPF) is disordered. Residues 15–26 (RQQPESMSTFRS) are compositionally biased toward polar residues. Residues 62-198 (RLTHSIEVAQ…AAIADDVAYS (137 aa)) enclose the HD domain.

Belongs to the dGTPase family. Type 2 subfamily.

The polypeptide is Deoxyguanosinetriphosphate triphosphohydrolase-like protein (Cereibacter sphaeroides (strain ATCC 17025 / ATH 2.4.3) (Rhodobacter sphaeroides)).